Here is a 485-residue protein sequence, read N- to C-terminus: Mitochondria-eating protein (485 aa).

Residues 112–210 adopt a coiled-coil conformation; sequence TSHERELNEV…SILSSESSIL (99 aa). Low complexity-rich tracts occupy residues 214–241 and 471–485; these read LSRS…SPTS and RSRS…TPRF. 2 disordered regions span residues 214–244 and 451–485; these read LSRS…SAKL and RSRS…TPRF.

Belongs to the MIEAP family.

The protein localises to the cytoplasm. It localises to the mitochondrion outer membrane. It is found in the mitochondrion matrix. Its function is as follows. Key regulator of mitochondrial quality that mediates the repairing or degradation of unhealthy mitochondria in response to mitochondrial damage. Mediator of mitochondrial protein catabolic process (also named MALM) by mediating the degradation of damaged proteins inside mitochondria by promoting the accumulation in the mitochondrial matrix of hydrolases that are characteristic of the lysosomal lumen. Also involved in mitochondrion degradation of damaged mitochondria by promoting the formation of vacuole-like structures (named MIV), which engulf and degrade unhealthy mitochondria by accumulating lysosomes. Binds cardiolipin. May form molecular condensates (non-membrane-bounded organelles) within mitochondria that compartmentalize and promote cardiolipin metabolism. The chain is Mitochondria-eating protein (spata18) from Xenopus laevis (African clawed frog).